A 24-amino-acid polypeptide reads, in one-letter code: L-amino-acid oxidase (24 aa).

The protein belongs to the flavin monoamine oxidase family. FIG1 subfamily. Homodimer; non-covalently linked. The cofactor is FAD. In terms of processing, N-glycosylated. As to expression, expressed by the venom gland.

Its subcellular location is the secreted. The catalysed reaction is an L-alpha-amino acid + O2 + H2O = a 2-oxocarboxylate + H2O2 + NH4(+). Functionally, catalyzes an oxidative deamination of predominantly hydrophobic and aromatic L-amino acids, thus producing hydrogen peroxide that may contribute to the diverse toxic effects of this enzyme. Exhibits diverse biological activities, such as hemorrhage, hemolysis, edema, apoptosis, and antiparasitic activities. This protein has antibacterial activity (against E.coli, S.aureus, and B.dysenteriae), cytotoxic activity, as well as an ability to induce platelet aggregation. Effects of snake L-amino oxidases on platelets are controversial, since they either induce aggregation or inhibit agonist-induced aggregation. These different effects are probably due to different experimental conditions. In Protobothrops mucrosquamatus (Taiwan habu), this protein is L-amino-acid oxidase.